We begin with the raw amino-acid sequence, 323 residues long: Beta-ketoacyl-[acyl-carrier-protein] synthase III (323 aa).

Active-site residues include C114 and H250. Positions 251–255 are ACP-binding; it reads QANIR. N280 is a catalytic residue.

It belongs to the thiolase-like superfamily. FabH family. As to quaternary structure, homodimer.

It is found in the cytoplasm. The catalysed reaction is malonyl-[ACP] + acetyl-CoA + H(+) = 3-oxobutanoyl-[ACP] + CO2 + CoA. Its pathway is lipid metabolism; fatty acid biosynthesis. Its function is as follows. Catalyzes the condensation reaction of fatty acid synthesis by the addition to an acyl acceptor of two carbons from malonyl-ACP. Catalyzes the first condensation reaction which initiates fatty acid synthesis and may therefore play a role in governing the total rate of fatty acid production. Possesses both acetoacetyl-ACP synthase and acetyl transacylase activities. Its substrate specificity determines the biosynthesis of branched-chain and/or straight-chain of fatty acids. The polypeptide is Beta-ketoacyl-[acyl-carrier-protein] synthase III (Ruegeria pomeroyi (strain ATCC 700808 / DSM 15171 / DSS-3) (Silicibacter pomeroyi)).